We begin with the raw amino-acid sequence, 282 residues long: 5'-nucleotidase SurE (282 aa).

4 residues coordinate a divalent metal cation: D12, D13, S43, and N98.

It belongs to the SurE nucleotidase family. A divalent metal cation serves as cofactor.

It localises to the cytoplasm. It catalyses the reaction a ribonucleoside 5'-phosphate + H2O = a ribonucleoside + phosphate. In terms of biological role, nucleotidase that shows phosphatase activity on nucleoside 5'-monophosphates. This chain is 5'-nucleotidase SurE, found in Hyperthermus butylicus (strain DSM 5456 / JCM 9403 / PLM1-5).